Here is a 468-residue protein sequence, read N- to C-terminus: V-type proton ATPase subunit S1 (468 aa).

The signal sequence occupies residues 1–35 (MMAATAAAQVRAGTRWAPALCRMPWLPLMLVAAAA). The propeptide occupies 36–228 (ATSEQQVPLV…TAVRPSRVAR (193 aa)). At 36 to 417 (ATSEQQVPLV…KKFSYASDCA (382 aa)) the chain is on the lumenal side. Asn167, Asn258, Asn271, Asn294, Asn301, Asn348, Asn355, and Asn404 each carry an N-linked (GlcNAc...) asparagine glycan. The cysteines at positions 369 and 416 are disulfide-linked. Residues 418 to 438 (GFFSPGIWMGLLTSLFMLFIF) traverse the membrane as a helical segment. The Cytoplasmic segment spans residues 439–468 (TYGLHMILSLKTMDRFDDHKGPTITLTQIV).

It belongs to the vacuolar ATPase subunit S1 family. In terms of assembly, accessory component of the multisubunit proton-transporting vacuolar (V)-ATPase protein pump. Interacts (via N-terminus) with ATP6AP2 (via N-terminus). Interacts with RNASEK. Interacts with TMEM106B (via C-terminus). In terms of processing, N-glycosylated.

Its subcellular location is the endoplasmic reticulum membrane. The protein resides in the endoplasmic reticulum-Golgi intermediate compartment membrane. It localises to the cytoplasmic vesicle. It is found in the secretory vesicle. The protein localises to the synaptic vesicle membrane. Its subcellular location is the clathrin-coated vesicle membrane. Accessory subunit of the proton-transporting vacuolar (V)-ATPase protein pump, which is required for luminal acidification of secretory vesicles. Guides the V-type ATPase into specialized subcellular compartments, such as neuroendocrine regulated secretory vesicles or the ruffled border of the osteoclast, thereby regulating its activity. Involved in membrane trafficking and Ca(2+)-dependent membrane fusion. May play a role in the assembly of the V-type ATPase complex. In aerobic conditions, involved in intracellular iron homeostasis, thus triggering the activity of Fe(2+) prolyl hydroxylase (PHD) enzymes, and leading to HIF1A hydroxylation and subsequent proteasomal degradation. In islets of Langerhans cells, may regulate the acidification of dense-core secretory granules. The protein is V-type proton ATPase subunit S1 (ATP6AP1) of Bos taurus (Bovine).